A 430-amino-acid polypeptide reads, in one-letter code: MTSLKVLIAGAGIGGPAAAFWLSRIGCEVTVVERSPRLRATGQQVDLSGQGIVVTRMMGIEDDLRAVRCPERGMRFVDHQGVTKAFFPVDYSGKAVYSPTQEVEVMRGDLVRILYDATKTLRGVKYVFDCHIKHFSQDDAPSGGKVHVALSDGTQDSYDILIGADGIASATREMMLGTSFPDLHRDLGVYMAYFTAPSQKDDTFDWSVCHISGGKAIMTRRDQPENIRVYLATRVGFDVLDAAKTLADQKAALISLFKGTQGWQVERFLNNLENSPEADDLYCQRMSQIRLPKGAWSKGRAVLLGDAAFCPGAIGGGVGTTAALIGAYVLAGEIEKEWEGCGRKTEEFNAQNATKEYERIVRPFITSRSDMSTWMVRLWLPESNFGVKTIQTIAGFAAGSQMSKYRGNSKPADETQKLEYPDYFGLGPKP.

FAD contacts are provided by residues 11–14 (AGIG), 33–34 (ER), Q43, R107, Y282, and D306.

Belongs to the aromatic-ring hydroxylase family. It depends on FAD as a cofactor.

It participates in secondary metabolite biosynthesis; terpenoid biosynthesis. In terms of biological role, flavin-dependent monooxygenase; part of the gene cluster that mediates the biosynthesis of eupenifeldin, a bistropolone meroterpenoid that acts as an antitumor agent. The first step of eupenifeldin biosynthesis is the biosynthesis of 3-methylorcinaldehyde performed by the non-reducing polyketide synthase eupA. Oxidative dearomatization of 3-methylorcinaldehyde likely catalyzed by the FAD-dependent monooxygenase eupB is followed by oxidative ring expansion by the 2-oxoglutarate-dependent dioxygenase eupC to provide the first tropolone metabolite, tropolone stipitaldehyde. In parallel, generation of sesquiterpene alpha-humulene from farnesylpyrophosphate (FPP) is catalyzed by the terpene cyclase eupE. The cytochrome P450 monooxygenase eupD then hydroxylates humulene to humulenol. The putative Diels-Alderase eupF probably catalyzes the formation of the tropolone-humulene skeleton by linking humulenol and the polyketide moiety. The short-chain dehydrogenase/reductase eupG and the flavin-dependent monooxygenase eupH are also essential for eupenifeldin biosynthesis and are likely the additional decorating enzymes of the tropolone-humulene skeleton to produce final eupenifeldin or derivatives. In Phoma sp, this protein is Flavin-dependent monooxygenase eupH.